The chain runs to 92 residues: Auxin-responsive protein SAUR28 (92 aa).

The protein belongs to the ARG7 family. Higher expression in thermo-responsive cultivars (e.g. cv. Alst-1, cv. Ang-0 and cv. Com-0) than in low thermo-responsive cultivars (e.g. cv. Dja-1, cv. El-0 and cv. Kon).

It is found in the cell membrane. Functions as a positive effector of cell expansion through modulation of auxin transport. Involved in thermo-responsiveness of plant architecture. Enhances plasma membrane H(+)-ATPase. The chain is Auxin-responsive protein SAUR28 from Arabidopsis thaliana (Mouse-ear cress).